A 353-amino-acid chain; its full sequence is Alanine racemase (353 aa).

The Proton acceptor; specific for D-alanine role is filled by Lys34. Lys34 carries the N6-(pyridoxal phosphate)lysine modification. Arg128 lines the substrate pocket. The Proton acceptor; specific for L-alanine role is filled by Tyr251. Met299 is a binding site for substrate.

Belongs to the alanine racemase family. Pyridoxal 5'-phosphate is required as a cofactor.

The enzyme catalyses L-alanine = D-alanine. Its pathway is amino-acid biosynthesis; D-alanine biosynthesis; D-alanine from L-alanine: step 1/1. Functionally, catalyzes the interconversion of L-alanine and D-alanine. May also act on other amino acids. This is Alanine racemase (alr) from Alcanivorax borkumensis (strain ATCC 700651 / DSM 11573 / NCIMB 13689 / SK2).